Consider the following 226-residue polypeptide: UPF0502 protein Daci_5373 (226 aa).

The protein belongs to the UPF0502 family.

The polypeptide is UPF0502 protein Daci_5373 (Delftia acidovorans (strain DSM 14801 / SPH-1)).